Reading from the N-terminus, the 416-residue chain is Probable carboxypeptidase An18g06210 (416 aa).

The signal sequence occupies residues M1–A16. N-linked (GlcNAc...) asparagine glycans are attached at residues N54, N70, and N129. Residue D142 coordinates Zn(2+). E174 serves as the catalytic Proton acceptor. E175 lines the Zn(2+) pocket. Residues N187 and N319 are each glycosylated (N-linked (GlcNAc...) asparagine).

Belongs to the peptidase M20A family. Zn(2+) serves as cofactor.

It localises to the secreted. This chain is Probable carboxypeptidase An18g06210, found in Aspergillus niger (strain ATCC MYA-4892 / CBS 513.88 / FGSC A1513).